We begin with the raw amino-acid sequence, 115 residues long: Dolichyl-diphosphooligosaccharide--protein glycosyltransferase subunit DAD2 (115 aa).

Over 1–31 (MVKSTSKDAQDLFHSLHSAYTATPTNLKIID) the chain is Cytoplasmic. A helical transmembrane segment spans residues 32 to 52 (LYVCFAVFTALIQVAYMALVG). Residues 53 to 55 (SFP) lie on the Lumenal side of the membrane. The helical transmembrane segment at 56 to 76 (FNSFLSGVLSCIGTAVLAVCL) threads the bilayer. Residues 77–94 (RIQVNKENKEFKDLAPER) lie on the Cytoplasmic side of the membrane. Residues 95–115 (AFADFVLCNLVLHLVIINFLG) traverse the membrane as a helical segment.

The protein belongs to the DAD/OST2 family. As to quaternary structure, component of the oligosaccharyltransferase (OST) complex.

The protein localises to the endoplasmic reticulum membrane. Its pathway is protein modification; protein glycosylation. Its function is as follows. Subunit of the oligosaccharyl transferase (OST) complex that catalyzes the initial transfer of a defined glycan (Glc(3)Man(9)GlcNAc(2) in eukaryotes) from the lipid carrier dolichol-pyrophosphate to an asparagine residue within an Asn-X-Ser/Thr consensus motif in nascent polypeptide chains, the first step in protein N-glycosylation. N-glycosylation occurs cotranslationally and the complex associates with the Sec61 complex at the channel-forming translocon complex that mediates protein translocation across the endoplasmic reticulum (ER). All subunits are required for a maximal enzyme activity. This chain is Dolichyl-diphosphooligosaccharide--protein glycosyltransferase subunit DAD2 (DAD2), found in Arabidopsis thaliana (Mouse-ear cress).